The following is a 746-amino-acid chain: Alpha-1,4-glucan:maltose-1-phosphate maltosyltransferase (746 aa).

The interval methionine 1 to glutamate 43 is disordered. The segment covering threonine 10–serine 32 has biased composition (low complexity). The alpha-maltose 1-phosphate site is built by lysine 343, glutamine 403, and aspartate 438. Catalysis depends on aspartate 473, which acts as the Nucleophile. Asparagine 474 is a binding site for alpha-maltose 1-phosphate. The active-site Proton donor is the glutamate 502. An alpha-maltose 1-phosphate-binding site is contributed by lysine 612–tyrosine 613.

This sequence belongs to the glycosyl hydrolase 13 family. GlgE subfamily. As to quaternary structure, homodimer.

It carries out the reaction alpha-maltose 1-phosphate + [(1-&gt;4)-alpha-D-glucosyl](n) = [(1-&gt;4)-alpha-D-glucosyl](n+2) + phosphate. Maltosyltransferase that uses maltose 1-phosphate (M1P) as the sugar donor to elongate linear or branched alpha-(1-&gt;4)-glucans. Is involved in a branched alpha-glucan biosynthetic pathway from trehalose, together with TreS, Mak and GlgB. The polypeptide is Alpha-1,4-glucan:maltose-1-phosphate maltosyltransferase (Bifidobacterium longum (strain NCC 2705)).